Reading from the N-terminus, the 323-residue chain is 1D-myo-inositol 2-acetamido-2-deoxy-alpha-D-glucopyranoside deacetylase 1 (323 aa).

Positions 30, 33, and 165 each coordinate Zn(2+).

It belongs to the MshB deacetylase family. Requires Zn(2+) as cofactor.

The catalysed reaction is 1D-myo-inositol 2-acetamido-2-deoxy-alpha-D-glucopyranoside + H2O = 1D-myo-inositol 2-amino-2-deoxy-alpha-D-glucopyranoside + acetate. Functionally, catalyzes the deacetylation of 1D-myo-inositol 2-acetamido-2-deoxy-alpha-D-glucopyranoside (GlcNAc-Ins) in the mycothiol biosynthesis pathway. The sequence is that of 1D-myo-inositol 2-acetamido-2-deoxy-alpha-D-glucopyranoside deacetylase 1 from Catenulispora acidiphila (strain DSM 44928 / JCM 14897 / NBRC 102108 / NRRL B-24433 / ID139908).